The following is a 107-amino-acid chain: Auxin-responsive protein SAUR50 (107 aa).

Belongs to the ARG7 family. Interacts with BZR1. In terms of tissue distribution, expressed in cotyledons, leaves, flowers and siliques.

The protein resides in the cell membrane. Functionally, provide a mechanistic link between auxin and plasma membrane H(+)-ATPases (PM H(+)-ATPases, e.g. AHA1 and AHA2), and triggers PM H(+)-ATPases activity by promoting phosphorylation of their C-terminal autoinhibitory domain as a result of PP2C-D subfamily of type 2C phosphatases inhibition, thus leading to the acidification of the apoplast and the facilitation of solutes and water uptake to drive cell expansion. Triggers plant growth probably by promoting cell elongation. Regulates branch angles and bending. Effector of hormonal and environmental signals in plant growth. This chain is Auxin-responsive protein SAUR50, found in Arabidopsis thaliana (Mouse-ear cress).